Reading from the N-terminus, the 477-residue chain is Glycogen synthase (477 aa).

ADP-alpha-D-glucose is bound at residue Lys-15.

This sequence belongs to the glycosyltransferase 1 family. Bacterial/plant glycogen synthase subfamily.

The catalysed reaction is [(1-&gt;4)-alpha-D-glucosyl](n) + ADP-alpha-D-glucose = [(1-&gt;4)-alpha-D-glucosyl](n+1) + ADP + H(+). Its pathway is glycan biosynthesis; glycogen biosynthesis. Synthesizes alpha-1,4-glucan chains using ADP-glucose. The chain is Glycogen synthase from Serratia proteamaculans (strain 568).